Reading from the N-terminus, the 1154-residue chain is uncharacterized protein (1154 aa).

The signal sequence occupies residues 1–18 (MKRNIFIKLLISLLLLSS). Cysteine 19 is lipidated: N-palmitoyl cysteine. Cysteine 19 is lipidated: S-diacylglycerol cysteine. The next 4 membrane-spanning stretches (helical) occupy residues 288–308 (ISVS…FLIG), 394–414 (LGFI…FLIF), 423–443 (ALIT…FMLF), and 458–478 (ISYA…SMII).

The protein belongs to the TrbL/VirB6 family.

It is found in the cell membrane. This is an uncharacterized protein from Rickettsia typhi (strain ATCC VR-144 / Wilmington).